We begin with the raw amino-acid sequence, 619 residues long: MAKIDTTSRLTSLRGFMKERNVQVYIIPSEDSHSSEYIADCDARREHISGFTGSAGCAVVTLETAALATDGRYFNQAAAQLDSNWTLLKQGLQDVPTWQEWSAEQSSGGKNVGVDPSLISGATAKNLAEKIRKSGGAELVPIEGNLVDLVWGKERPARPSEKVIVQPDELAGESVTNKLTKLRQELEKKRSPGFLVSMLDEIAWLFNLRGNDIPFNPVFFSYAIVTPDVATLYIDDSKLDDKCRSHLSANKVEIKPYDSILDDARKLHASVSEKGKSENAAPTGNFLISNKGSWALKRALGGDSSVDEIRSPVGDAKAIKSEAELVGMRACHVRDGAALIQYFAWLEDQLVNKKATLDEVEAADKLEELRSQKSDFVGLSFPTISSTGANAAIIHYGPERGSCATIDPEAIYLCDSGAQYHDGTTDTTRTLHFGTPTEAEREAYTLVLKGHIALDQAVFPKGTTGFALDGLARQHLWKNGLDYRHGTGHGVGSFLNVHEGPIGIGTRVQFAEVALAPGNVLSNEPGYYEDGKYGIRIENIVVVKEIKTKHKFGDKPFLGFEHVTMVPYCRNLIDTKLLTSEEKEWLNAYNAKVVDKTQGYFEGDDVTLAWLKRETAQVE.

Residues D415, D426, E524, and E538 each contribute to the Mn(2+) site.

The protein belongs to the peptidase M24B family. Mn(2+) is required as a cofactor.

It catalyses the reaction Release of any N-terminal amino acid, including proline, that is linked to proline, even from a dipeptide or tripeptide.. Functionally, catalyzes the removal of a penultimate prolyl residue from the N-termini of peptides. This Fusarium vanettenii (strain ATCC MYA-4622 / CBS 123669 / FGSC 9596 / NRRL 45880 / 77-13-4) (Fusarium solani subsp. pisi) protein is Probable Xaa-Pro aminopeptidase P (AMPP).